Consider the following 379-residue polypeptide: tRNA-specific 2-thiouridylase MnmA (379 aa).

Residues 23-30 (AMSGGVDS) and leucine 49 contribute to the ATP site. Cysteine 117 acts as the Nucleophile in catalysis. Cysteine 117 and cysteine 214 are joined by a disulfide. An ATP-binding site is contributed by glycine 141. Residues 163–165 (RDQ) are interaction with tRNA. Residue cysteine 214 is the Cysteine persulfide intermediate of the active site.

Belongs to the MnmA/TRMU family.

The protein resides in the cytoplasm. It carries out the reaction S-sulfanyl-L-cysteinyl-[protein] + uridine(34) in tRNA + AH2 + ATP = 2-thiouridine(34) in tRNA + L-cysteinyl-[protein] + A + AMP + diphosphate + H(+). Functionally, catalyzes the 2-thiolation of uridine at the wobble position (U34) of tRNA, leading to the formation of s(2)U34. In Cereibacter sphaeroides (strain ATCC 17029 / ATH 2.4.9) (Rhodobacter sphaeroides), this protein is tRNA-specific 2-thiouridylase MnmA.